A 464-amino-acid chain; its full sequence is Siroheme synthase (464 aa).

The interval 1-203 (MEFLPLFHNL…GQGAEAERLL (203 aa)) is precorrin-2 dehydrogenase /sirohydrochlorin ferrochelatase. Residues 22–23 (EI) and 43–44 (PE) contribute to the NAD(+) site. Phosphoserine is present on serine 128. The segment at 216–464 (GEVYLVGAGP…AWFEGAQATL (249 aa)) is uroporphyrinogen-III C-methyltransferase. Proline 225 is an S-adenosyl-L-methionine binding site. Catalysis depends on aspartate 248, which acts as the Proton acceptor. Lysine 270 serves as the catalytic Proton donor. S-adenosyl-L-methionine is bound by residues 301–303 (GGD), isoleucine 306, 331–332 (TA), methionine 383, and glycine 412.

The protein in the N-terminal section; belongs to the precorrin-2 dehydrogenase / sirohydrochlorin ferrochelatase family. It in the C-terminal section; belongs to the precorrin methyltransferase family.

It catalyses the reaction uroporphyrinogen III + 2 S-adenosyl-L-methionine = precorrin-2 + 2 S-adenosyl-L-homocysteine + H(+). The enzyme catalyses precorrin-2 + NAD(+) = sirohydrochlorin + NADH + 2 H(+). The catalysed reaction is siroheme + 2 H(+) = sirohydrochlorin + Fe(2+). It participates in cofactor biosynthesis; adenosylcobalamin biosynthesis; precorrin-2 from uroporphyrinogen III: step 1/1. It functions in the pathway cofactor biosynthesis; adenosylcobalamin biosynthesis; sirohydrochlorin from precorrin-2: step 1/1. Its pathway is porphyrin-containing compound metabolism; siroheme biosynthesis; precorrin-2 from uroporphyrinogen III: step 1/1. The protein operates within porphyrin-containing compound metabolism; siroheme biosynthesis; siroheme from sirohydrochlorin: step 1/1. It participates in porphyrin-containing compound metabolism; siroheme biosynthesis; sirohydrochlorin from precorrin-2: step 1/1. Multifunctional enzyme that catalyzes the SAM-dependent methylations of uroporphyrinogen III at position C-2 and C-7 to form precorrin-2 via precorrin-1. Then it catalyzes the NAD-dependent ring dehydrogenation of precorrin-2 to yield sirohydrochlorin. Finally, it catalyzes the ferrochelation of sirohydrochlorin to yield siroheme. This Pseudomonas syringae pv. tomato (strain ATCC BAA-871 / DC3000) protein is Siroheme synthase.